We begin with the raw amino-acid sequence, 186 residues long: Dirigent protein 7 (186 aa).

The first 21 residues, 1 to 21 (MAKLILIIVTQILLIAAVVSA), serve as a signal peptide directing secretion. N70, N91, and N126 each carry an N-linked (GlcNAc...) asparagine glycan.

The protein belongs to the plant dirigent protein family. In terms of assembly, homodimer.

Its subcellular location is the secreted. The protein resides in the extracellular space. It is found in the apoplast. Its function is as follows. Dirigent proteins impart stereoselectivity on the phenoxy radical-coupling reaction, yielding optically active lignans from two molecules of coniferyl alcohol in the biosynthesis of lignans, flavonolignans, and alkaloids and thus plays a central role in plant secondary metabolism. The polypeptide is Dirigent protein 7 (DIR7) (Arabidopsis thaliana (Mouse-ear cress)).